The following is an 823-amino-acid chain: Protein FAM193B (823 aa).

Disordered regions lie at residues 1–78, 158–191, 209–281, and 381–409; these read MTRR…TSQS, SCKSQSCGGDSHSSSSSSSSSSSSSSSCHGNSGD, SPHS…PTTP, and CEADEGLGEEEDSSSERSSCTSSSTHQRD. Pro residues predominate over residues 26 to 36; the sequence is PQAPEPPPPPS. Positions 52 to 64 are enriched in basic and acidic residues; sequence PYRDDPREEDEPK. 2 stretches are compositionally biased toward low complexity: residues 168–184 and 263–281; these read SHSSSSSSSSSSSSSSS and SHPGSFGSPPHPHLLPTTP. The span at 382–393 shows a compositional bias: acidic residues; the sequence is EADEGLGEEEDS. Residues 422-484 adopt a coiled-coil conformation; that stretch reads GHNAEKEKAQ…RLQEIKNTVK (63 aa). Disordered stretches follow at residues 503–583 and 599–775; these read FSKE…PENG and WVKT…PKDM. Composition is skewed to polar residues over residues 516 to 526 and 641 to 657; these read LAPSNPSGSSE and QGNQAKKSEVSPASQSP. Residues serine 694, serine 706, and serine 813 each carry the phosphoserine modification.

Belongs to the FAM193 family.

Its subcellular location is the cytoplasm. The protein localises to the nucleus. In Bos taurus (Bovine), this protein is Protein FAM193B (FAM193B).